Here is a 455-residue protein sequence, read N- to C-terminus: Pentatricopeptide repeat-containing protein At3g26630, chloroplastic (455 aa).

Residues 1-19 constitute a chloroplast transit peptide; that stretch reads MAAPSPSSPPNLLSPPPFR. 11 PPR repeats span residues 51–81, 82–117, 118–152, 153–187, 188–214, 215–249, 250–284, 285–315, 316–350, 352–387, and 388–418; these read DQLL…LQSP, STFT…QSQF, DKFT…GFFN, DVFF…SIVS, WTTM…MPMR, NVVS…DVKP, NEFT…GFVL, DCFL…MQGK, SLAT…ASVE, DAIT…GISP, and IREH…MDSD.

Belongs to the PPR family. PCMP-A subfamily.

It localises to the plastid. It is found in the chloroplast. The polypeptide is Pentatricopeptide repeat-containing protein At3g26630, chloroplastic (PCMP-A6) (Arabidopsis thaliana (Mouse-ear cress)).